Consider the following 339-residue polypeptide: DNA-directed RNA polymerase subunit alpha (339 aa).

Residues 1–235 form an alpha N-terminal domain (alpha-NTD) region; it reads MTIQKNWQEL…DQLNVFVNFE (235 aa). Positions 251-339 are alpha C-terminal domain (alpha-CTD); it reads FNPAFLKKVD…ELAKRFEDHY (89 aa).

This sequence belongs to the RNA polymerase alpha chain family. In terms of assembly, homodimer. The RNAP catalytic core consists of 2 alpha, 1 beta, 1 beta' and 1 omega subunit. When a sigma factor is associated with the core the holoenzyme is formed, which can initiate transcription.

The enzyme catalyses RNA(n) + a ribonucleoside 5'-triphosphate = RNA(n+1) + diphosphate. DNA-dependent RNA polymerase catalyzes the transcription of DNA into RNA using the four ribonucleoside triphosphates as substrates. The polypeptide is DNA-directed RNA polymerase subunit alpha (Rhodopseudomonas palustris (strain BisB5)).